We begin with the raw amino-acid sequence, 261 residues long: Indole-3-glycerol phosphate synthase (261 aa).

The protein belongs to the TrpC family.

The enzyme catalyses 1-(2-carboxyphenylamino)-1-deoxy-D-ribulose 5-phosphate + H(+) = (1S,2R)-1-C-(indol-3-yl)glycerol 3-phosphate + CO2 + H2O. Its pathway is amino-acid biosynthesis; L-tryptophan biosynthesis; L-tryptophan from chorismate: step 4/5. The protein is Indole-3-glycerol phosphate synthase of Oceanobacillus iheyensis (strain DSM 14371 / CIP 107618 / JCM 11309 / KCTC 3954 / HTE831).